The primary structure comprises 139 residues: uncharacterized protein (139 aa).

This is an uncharacterized protein from Burkholderia cepacia (Pseudomonas cepacia).